Here is a 439-residue protein sequence, read N- to C-terminus: Microfibrillar-associated protein 1 (439 aa).

The segment covering 1-17 (MSVPSSLMKQPPIQSTA) has biased composition (polar residues). The interval 1–200 (MSVPSSLMKQ…SEDEMEPRLK (200 aa)) is disordered. Serine 2 is subject to N-acetylserine. A compositionally biased stretch (basic and acidic residues) spans 23–34 (RNEKGEISMEKV). 2 positions are modified to phosphoserine: serine 52 and serine 53. The segment covering 61–70 (QFIKKAKEQE) has biased composition (basic and acidic residues). Lysine 67 participates in a covalent cross-link: Glycyl lysine isopeptide (Lys-Gly) (interchain with G-Cter in SUMO2). Over residues 71-81 (AEPEEQEEDSS) the composition is skewed to acidic residues. Phosphoserine is present on residues serine 94, serine 116, serine 118, serine 132, and serine 133. Composition is skewed to acidic residues over residues 112–122 (VVGESDSEVEG) and 131–144 (DSSE…DEEE). A compositionally biased stretch (basic and acidic residues) spans 145–163 (IERRRGMMRQRAQERKNEE). Acidic residues predominate over residues 178–195 (ESESESEYEEYTDSEDEM). Lysine 249 participates in a covalent cross-link: Glycyl lysine isopeptide (Lys-Gly) (interchain with G-Cter in SUMO2). Threonine 267 is modified (phosphothreonine). Lysine 357 is covalently cross-linked (Glycyl lysine isopeptide (Lys-Gly) (interchain with G-Cter in SUMO2)). A Phosphoserine modification is found at serine 361. Residues lysine 371, lysine 381, lysine 415, and lysine 418 each participate in a glycyl lysine isopeptide (Lys-Gly) (interchain with G-Cter in SUMO2) cross-link. A Phosphoserine modification is found at serine 432.

The protein belongs to the MFAP1 family. In terms of assembly, component of the spliceosome B complex. Interacts with PRPF38A (via N-terminal interaction domain).

It is found in the nucleus. Functionally, involved in pre-mRNA splicing as a component of the spliceosome. The sequence is that of Microfibrillar-associated protein 1 from Bos taurus (Bovine).